The following is a 205-amino-acid chain: Glycerol-3-phosphate acyltransferase (205 aa).

The Periplasmic segment spans residues 1–3 (MSA). Residues 4–24 (IAPGMILIAYLCGSISSAILV) traverse the membrane as a helical segment. The Cytoplasmic portion of the chain corresponds to 25–52 (CRLCGLPDPRTSGSGNPGATNVLRIGGK). A helical transmembrane segment spans residues 53-73 (GAAVAVLIFDVLKGMLPVWGA). Residues 74–80 (YELGVSP) lie on the Periplasmic side of the membrane. The helical transmembrane segment at 81–101 (FWLGLIAIAACLGHIWPVFFG) threads the bilayer. The Cytoplasmic segment spans residues 102 to 111 (FKGGKGVATA). The chain crosses the membrane as a helical span at residues 112 to 132 (FGAIAPIGWDLTGVMAGTWLL). Residues 133 to 137 (TVLLS) are Periplasmic-facing. Residues 138–158 (GYSSLGAIVSALIAPFYVWWF) form a helical membrane-spanning segment. Residues 159–205 (KPQFTFPVSMLSCLILLRHHDNIQRLWRRQETKIWTKFKRKREKDPE) are Cytoplasmic-facing.

It belongs to the PlsY family. As to quaternary structure, probably interacts with PlsX.

The protein localises to the cell inner membrane. The enzyme catalyses sn-glycerol 3-phosphate + an acyl-CoA = a 1-acyl-sn-glycero-3-phosphate + CoA. It carries out the reaction a fatty acyl-[ACP] + sn-glycerol 3-phosphate = a 1-acyl-sn-glycero-3-phosphate + holo-[ACP]. It participates in lipid metabolism; phospholipid metabolism. Functionally, catalyzes the transfer of an acyl group from acyl-ACP to glycerol-3-phosphate (G3P) to form lysophosphatidic acid (LPA). This enzyme can also utilize acyl-CoA as fatty acyl donor, but not acyl-PO(4). The sequence is that of Glycerol-3-phosphate acyltransferase from Escherichia coli O8 (strain IAI1).